The chain runs to 364 residues: MSLPRFDPAEYETQLAAKIARFKSDFAPLDLPEPEVFRSEPLHYRLRAEFRIWHSEGRLDYAMFDPADPKRPVLIDGFPAAAAPIAAAMPVLRERVMASEPLRRKLFQVEFLATLSGELMISLVYHRPLEADWEAAARELAAAMGVQLIGRSRKQKIVLERDWVLESFELDGRTLHYQQIEGSFSQPNGGVNRQMLVWARRQAEGSGADLLELYCGNGNFTVALAPLFGKVLATEMSKSSVRAAHYNLAANAVDNVTMVRMASEEISDALAGGRAYRRMQGIDLAGYRFGTLFVDPPRSGLDEATVALARRFDRILYISCNPQTLHDNIAALRDTHGIAAAAAFDQFPYTHHLECGVLLQKTAA.

S-adenosyl-L-methionine-binding residues include Q186, Y214, N219, E235, and D295. Catalysis depends on C320, which acts as the Nucleophile. E354 functions as the Proton acceptor in the catalytic mechanism.

The protein belongs to the class I-like SAM-binding methyltransferase superfamily. RNA M5U methyltransferase family. TrmA subfamily.

The enzyme catalyses uridine(54) in tRNA + S-adenosyl-L-methionine = 5-methyluridine(54) in tRNA + S-adenosyl-L-homocysteine + H(+). It carries out the reaction uridine(341) in tmRNA + S-adenosyl-L-methionine = 5-methyluridine(341) in tmRNA + S-adenosyl-L-homocysteine + H(+). Functionally, dual-specificity methyltransferase that catalyzes the formation of 5-methyluridine at position 54 (m5U54) in all tRNAs, and that of position 341 (m5U341) in tmRNA (transfer-mRNA). This Azoarcus sp. (strain BH72) protein is tRNA/tmRNA (uracil-C(5))-methyltransferase.